The chain runs to 353 residues: Phospho-N-acetylmuramoyl-pentapeptide-transferase (353 aa).

10 helical membrane passes run 22 to 42, 65 to 85, 88 to 108, 129 to 149, 161 to 181, 192 to 212, 228 to 248, 256 to 276, 281 to 301, and 330 to 350; these read FAFF…ITWA, TPTM…LFCI, DNIF…IGLI, LLAQ…SSEL, PLFD…ISSS, GLAT…LYLS, GLGE…GFLW, VFMG…LAII, ILLL…ILQV, and KIIV…LASI.

It belongs to the glycosyltransferase 4 family. MraY subfamily. Mg(2+) serves as cofactor.

It localises to the cell inner membrane. The catalysed reaction is UDP-N-acetyl-alpha-D-muramoyl-L-alanyl-gamma-D-glutamyl-meso-2,6-diaminopimeloyl-D-alanyl-D-alanine + di-trans,octa-cis-undecaprenyl phosphate = di-trans,octa-cis-undecaprenyl diphospho-N-acetyl-alpha-D-muramoyl-L-alanyl-D-glutamyl-meso-2,6-diaminopimeloyl-D-alanyl-D-alanine + UMP. Its pathway is cell wall biogenesis; peptidoglycan biosynthesis. In terms of biological role, catalyzes the initial step of the lipid cycle reactions in the biosynthesis of the cell wall peptidoglycan: transfers peptidoglycan precursor phospho-MurNAc-pentapeptide from UDP-MurNAc-pentapeptide onto the lipid carrier undecaprenyl phosphate, yielding undecaprenyl-pyrophosphoryl-MurNAc-pentapeptide, known as lipid I. The sequence is that of Phospho-N-acetylmuramoyl-pentapeptide-transferase from Campylobacter jejuni (strain RM1221).